The primary structure comprises 367 residues: Methylthioribose-1-phosphate isomerase (367 aa).

Substrate contacts are provided by residues Arg54–Ala56, Arg91, and Gln201. The active-site Proton donor is the Asp242. Substrate is bound at residue Asn252–Lys253.

It belongs to the eIF-2B alpha/beta/delta subunits family. MtnA subfamily.

The enzyme catalyses 5-(methylsulfanyl)-alpha-D-ribose 1-phosphate = 5-(methylsulfanyl)-D-ribulose 1-phosphate. Its pathway is amino-acid biosynthesis; L-methionine biosynthesis via salvage pathway; L-methionine from S-methyl-5-thio-alpha-D-ribose 1-phosphate: step 1/6. Catalyzes the interconversion of methylthioribose-1-phosphate (MTR-1-P) into methylthioribulose-1-phosphate (MTRu-1-P). The protein is Methylthioribose-1-phosphate isomerase of Acidiphilium cryptum (strain JF-5).